Consider the following 247-residue polypeptide: GTP cyclohydrolase 1 type 2 homolog (247 aa).

A divalent metal cation-binding residues include His-63, His-64, Asp-101, His-215, and Glu-219.

This sequence belongs to the GTP cyclohydrolase I type 2/NIF3 family. As to quaternary structure, toroid-shaped homohexamer. In the hexamer, 3 dimers assemble to form a ring-like structure surrounding a central hole.

Its function is as follows. Provides significant protection from radiation damage and may be involved in the degradation of radiation-damaged nucleotides. In Salmonella typhi, this protein is GTP cyclohydrolase 1 type 2 homolog (ybgI).